Here is a 445-residue protein sequence, read N- to C-terminus: UPF0210 protein SZO_15840 (445 aa).

The protein belongs to the UPF0210 family. Homodimer.

The polypeptide is UPF0210 protein SZO_15840 (Streptococcus equi subsp. zooepidemicus (strain H70)).